A 283-amino-acid chain; its full sequence is MTAQLIDGKTISAALLDRVAAGVKARTEAGKRAPALAVILVGNNPASEVYVRNKKKGCEKAGIQSLAYDLPESTSEADLLALVDELNARSDVDGILVQLPLPRHINPETVIERINPKKDVDGFHPYNMGRLAVKMPLLRPCTPRGVMIMLEHAGISVEGKHAVVIGQSNIVGRPMALELLMERATVTICHSRTRDLPEEVKRADIIVAAVGIPRFVKGDWVKPGAVVIDVGINRLEDGKLCGDVDFDAAKEHASWITPVPGGVGLMTVATLLANTLDAANLHA.

NADP(+)-binding positions include 166 to 168 (GQS), serine 191, and isoleucine 232.

The protein belongs to the tetrahydrofolate dehydrogenase/cyclohydrolase family. In terms of assembly, homodimer.

The catalysed reaction is (6R)-5,10-methylene-5,6,7,8-tetrahydrofolate + NADP(+) = (6R)-5,10-methenyltetrahydrofolate + NADPH. The enzyme catalyses (6R)-5,10-methenyltetrahydrofolate + H2O = (6R)-10-formyltetrahydrofolate + H(+). Its pathway is one-carbon metabolism; tetrahydrofolate interconversion. In terms of biological role, catalyzes the oxidation of 5,10-methylenetetrahydrofolate to 5,10-methenyltetrahydrofolate and then the hydrolysis of 5,10-methenyltetrahydrofolate to 10-formyltetrahydrofolate. This Laribacter hongkongensis (strain HLHK9) protein is Bifunctional protein FolD.